The sequence spans 473 residues: Photosystem II CP43 reaction center protein (473 aa).

Residues 1–14 (MKTLYSLRRFYPVE) constitute a propeptide that is removed on maturation. At Thr15 the chain carries N-acetylthreonine. At Thr15 the chain carries Phosphothreonine. 5 helical membrane-spanning segments follow: residues 69–93 (LFEVAHFVPEKPMYEQGLILLPHLA), 134–155 (LLGPETLEESFPFFGYVWKDRN), 178–200 (KALYFGGVYDTWAPGGGDVRKIT), 255–275 (KPFAWARRALVWSGEAYLSYS), and 291–312 (WFNNTAYPSEFYGPTGPEASQA). Glu367 contacts [CaMn4O5] cluster. The helical transmembrane segment at 447–471 (RARAAAAGFEKGIDRDFEPVLSMTP) threads the bilayer.

Belongs to the PsbB/PsbC family. PsbC subfamily. In terms of assembly, PSII is composed of 1 copy each of membrane proteins PsbA, PsbB, PsbC, PsbD, PsbE, PsbF, PsbH, PsbI, PsbJ, PsbK, PsbL, PsbM, PsbT, PsbX, PsbY, PsbZ, Psb30/Ycf12, at least 3 peripheral proteins of the oxygen-evolving complex and a large number of cofactors. It forms dimeric complexes. Binds multiple chlorophylls and provides some of the ligands for the Ca-4Mn-5O cluster of the oxygen-evolving complex. It may also provide a ligand for a Cl- that is required for oxygen evolution. PSII binds additional chlorophylls, carotenoids and specific lipids. is required as a cofactor.

It is found in the plastid. The protein localises to the chloroplast thylakoid membrane. Functionally, one of the components of the core complex of photosystem II (PSII). It binds chlorophyll and helps catalyze the primary light-induced photochemical processes of PSII. PSII is a light-driven water:plastoquinone oxidoreductase, using light energy to abstract electrons from H(2)O, generating O(2) and a proton gradient subsequently used for ATP formation. The polypeptide is Photosystem II CP43 reaction center protein (Vitis vinifera (Grape)).